A 266-amino-acid polypeptide reads, in one-letter code: Large ribosomal subunit protein eL8 (266 aa).

Glycyl lysine isopeptide (Lys-Gly) (interchain with G-Cter in SUMO2) cross-links involve residues Lys-11, Lys-20, and Lys-21. Lys-34 carries the N6-acetyllysine modification. Lys-48 participates in a covalent cross-link: Glycyl lysine isopeptide (Lys-Gly) (interchain with G-Cter in SUMO2). At Lys-97 the chain carries N6-acetyllysine; alternate. Lys-97 participates in a covalent cross-link: Glycyl lysine isopeptide (Lys-Gly) (interchain with G-Cter in SUMO2); alternate. Lys-125 is covalently cross-linked (Glycyl lysine isopeptide (Lys-Gly) (interchain with G-Cter in SUMO2)). Position 217 is an N6-acetyllysine (Lys-217). Residue Lys-245 forms a Glycyl lysine isopeptide (Lys-Gly) (interchain with G-Cter in SUMO2) linkage.

The protein belongs to the eukaryotic ribosomal protein eL8 family. As to quaternary structure, component of the large ribosomal subunit. Interacts with CRY1. Interacts with DICER1, AGO2, TARBP2, MOV10 and EIF6; they form a large RNA-induced silencing complex (RISC).

It is found in the cytoplasm. In terms of biological role, component of the large ribosomal subunit. The ribosome is a large ribonucleoprotein complex responsible for the synthesis of proteins in the cell. This Mus musculus (Mouse) protein is Large ribosomal subunit protein eL8 (Rpl7a).